Reading from the N-terminus, the 66-residue chain is Antimicrobial peptide Eval967 (66 aa).

Positions 1–22 (MKFSALLPVFFLLLAVIDYCQA) are cleaved as a signal peptide. A Leucine amide modification is found at leucine 36. Residues 37–66 (GKRDVKTQKYVDIKRRDLDLDDMLSKLFED) constitute a propeptide that is removed on maturation.

This sequence belongs to the non-disulfide-bridged peptide (NDBP) superfamily. Short antimicrobial peptide (group 4) family. In terms of tissue distribution, expressed by the venom gland.

The protein resides in the secreted. Its function is as follows. Probable antimicrobial peptide. Has no inhibitory activity against herpes simplex virus type 1 (HSV-1). The sequence is that of Antimicrobial peptide Eval967 from Euscorpiops validus (Scorpion).